We begin with the raw amino-acid sequence, 46 residues long: Replication-associated protein (46 aa).

Functionally, seems to play a role in virus replication. The polypeptide is Replication-associated protein (Solanum tuberosum (Potato)).